The primary structure comprises 475 residues: Ribulose bisphosphate carboxylase large chain (475 aa).

The propeptide occupies 1–2 (MS). Proline 3 carries the post-translational modification N-acetylproline. Lysine 14 carries the N6,N6,N6-trimethyllysine modification. Residues asparagine 123 and threonine 173 each coordinate substrate. The active-site Proton acceptor is the lysine 175. Lysine 177 lines the substrate pocket. Residues lysine 201, aspartate 203, and glutamate 204 each contribute to the Mg(2+) site. Lysine 201 carries the post-translational modification N6-carboxylysine. Histidine 294 serves as the catalytic Proton acceptor. Residues arginine 295, histidine 327, and serine 379 each contribute to the substrate site.

It belongs to the RuBisCO large chain family. Type I subfamily. Heterohexadecamer of 8 large chains and 8 small chains; disulfide-linked. The disulfide link is formed within the large subunit homodimers. Mg(2+) serves as cofactor. Post-translationally, the disulfide bond which can form in the large chain dimeric partners within the hexadecamer appears to be associated with oxidative stress and protein turnover.

It localises to the plastid. It is found in the chloroplast. It carries out the reaction 2 (2R)-3-phosphoglycerate + 2 H(+) = D-ribulose 1,5-bisphosphate + CO2 + H2O. The enzyme catalyses D-ribulose 1,5-bisphosphate + O2 = 2-phosphoglycolate + (2R)-3-phosphoglycerate + 2 H(+). Its function is as follows. RuBisCO catalyzes two reactions: the carboxylation of D-ribulose 1,5-bisphosphate, the primary event in carbon dioxide fixation, as well as the oxidative fragmentation of the pentose substrate in the photorespiration process. Both reactions occur simultaneously and in competition at the same active site. This Betula papyrifera (Paper birch) protein is Ribulose bisphosphate carboxylase large chain.